The chain runs to 298 residues: Cyclin-C (298 aa).

In terms of domain architecture, Cyclin N-terminal spans 46–162 (NFITAVATEC…ILDCCLVVHH (117 aa)). Residues 278 to 298 (KLPKPNTPIPPPQQQQSSYHM) are disordered.

Belongs to the cyclin family. Cyclin C subfamily. Component of the Mediator complex.

The protein localises to the nucleus. Its function is as follows. Component of the Mediator complex, a coactivator involved in regulated gene transcription of nearly all RNA polymerase II-dependent genes. Mediator functions as a bridge to convey information from gene-specific regulatory proteins to the basal RNA polymerase II transcription machinery. Mediator is recruited to promoters by direct interactions with regulatory proteins and serves as a scaffold for the assembly of a functional preinitiation complex with RNA polymerase II and the general transcription factors. Binds to and activates cyclin-dependent kinase cdk-8 that phosphorylates the CTD (C-terminal domain) of the large subunit of RNA polymerase II (RNAp II), which may inhibit the formation of a transcription initiation complex. The sequence is that of Cyclin-C (cic-1) from Caenorhabditis briggsae.